Here is a 400-residue protein sequence, read N- to C-terminus: D-alanyl-D-alanine carboxypeptidase DacC (400 aa).

The signal sequence occupies residues 1–27 (MTQYSSLLRGLAAGSAFLFLFAPTAFA). Catalysis depends on Ser66, which acts as the Acyl-ester intermediate. The active-site Proton acceptor is the Lys69. Ser132 is an active-site residue. Lys235 is a binding site for substrate. A required for inner membrane binding region spans residues 383–400 (VWDFVMMKFHQWFGSWFS).

This sequence belongs to the peptidase S11 family.

The protein localises to the cell inner membrane. It carries out the reaction Preferential cleavage: (Ac)2-L-Lys-D-Ala-|-D-Ala. Also transpeptidation of peptidyl-alanyl moieties that are N-acyl substituents of D-alanine.. It functions in the pathway cell wall biogenesis; peptidoglycan biosynthesis. In terms of biological role, removes C-terminal D-alanyl residues from sugar-peptide cell wall precursors. This chain is D-alanyl-D-alanine carboxypeptidase DacC (dacC), found in Escherichia coli (strain K12).